The primary structure comprises 932 residues: Protein hir1 (932 aa).

7 WD repeats span residues 16–55 (GHRL…RENE), 72–111 (THTG…PGLG), 132–171 (GHDN…RLKR), 174–213 (AHQS…IEKT), 222–265 (PLST…SEIN), 268–316 (GHEG…PLLS), and 320–361 (VFQK…DMVS). 2 stretches are compositionally biased toward polar residues: residues 405-426 (STTD…QKTP) and 441-453 (TVDT…SKEQ). Disordered regions lie at residues 405–470 (STTD…NEIP) and 498–520 (TPST…LPPQ). Over residues 498 to 507 (TPSTSRLAST) the composition is skewed to low complexity.

It belongs to the WD repeat HIR1 family. As to quaternary structure, interacts with his3 and slm9.

It is found in the cytoplasm. Its subcellular location is the nucleus. Probably required for replication-independent chromatin assembly. Required for transcriptional silencing in the outer repeat (otr) centromeric repeats and the Tf2 long terminal repeat retrotransposons. Repressor of histone gene transcription in G1 arrested cells. Required for repression of htb1 gene expression outside of S phase. This Schizosaccharomyces pombe (strain 972 / ATCC 24843) (Fission yeast) protein is Protein hir1 (hip1).